A 353-amino-acid chain; its full sequence is 3-dehydroquinate synthase (353 aa).

Belongs to the archaeal-type DHQ synthase family.

It carries out the reaction 2-amino-2,3,7-trideoxy-D-lyxo-hept-6-ulosonate + NAD(+) + H2O = 3-dehydroquinate + NH4(+) + NADH + H(+). Its function is as follows. Catalyzes the oxidative deamination and cyclization of 2-amino-3,7-dideoxy-D-threo-hept-6-ulosonic acid (ADH) to yield 3-dehydroquinate (DHQ), which is fed into the canonical shikimic pathway of aromatic amino acid biosynthesis. The sequence is that of 3-dehydroquinate synthase from Nitrosopumilus maritimus (strain SCM1).